The following is a 424-amino-acid chain: Phosphoprotein associated with glycosphingolipid-enriched microdomains 1 (424 aa).

At 1 to 17 (MGPAGSALSSGQMQMQM) the chain is on the extracellular side. Residues 18 to 38 (VLWGSLAAVAMFFLITFLILL) traverse the membrane as a helical; Signal-anchor for type III membrane protein segment. 2 S-palmitoyl cysteine lipidation sites follow: Cys-39 and Cys-42. The Cytoplasmic segment spans residues 39 to 424 (CSSCDRDKKP…LQQGRDVTRL (386 aa)). Phosphoserine occurs at positions 52 and 63. Position 107 is a phosphotyrosine; by LYN (Tyr-107). A Phosphoserine modification is found at Ser-157. Tyr-165, Tyr-183, and Tyr-224 each carry phosphotyrosine. Residues 194-347 (DKSQGGKSKS…GPPQRSSSSC (154 aa)) form a disordered region. Positions 215–230 (AEGKADFAEYASVDRN) are enriched in basic and acidic residues. Ser-226 is modified (phosphoserine). The span at 236 to 247 (STNAESILGTSS) shows a compositional bias: polar residues. At Tyr-314 the chain carries Phosphotyrosine; by FYN and LYN. The interval 314–317 (YSSV) is interaction with CSK. Positions 331-347 (STCQCPQGPPQRSSSSC) are enriched in polar residues. Ser-346 carries the phosphoserine modification. Residues Tyr-351, Tyr-381, and Tyr-409 each carry the phosphotyrosine modification. Residues 361 to 424 (PNSISMLPPA…LQQGRDVTRL (64 aa)) are disordered. The interaction with NHERF1 stretch occupies residues 422–424 (TRL).

As to quaternary structure, interacts with NHERF1/EBP50. In resting T-cells, part of a PAG1-NHERF1-MSN complex which is disrupted upon TCR activation. When phosphorylated, interacts with CSK. Identified in a complex with LYN and STAT3. Interacts with LYN. Post-translationally, palmitoylated. Phosphorylated by FYN on Tyr-314 in resting T-cells; which promotes interaction with CSK. Dephosphorylated by PTPRC/CD45 upon TCR activation; which leads to CSK dissociation. May also be dephosphorylated by PTPN11. Hyperphosphorylated in mast cells upon FCER1 activation. Phosphorylated by LYN in response to EPO. As to expression, ubiquitously expressed, with highest levels in developing brain, lung, thymus, spleen and testis. Present in mast cells.

It localises to the cell membrane. Its function is as follows. Negatively regulates TCR (T-cell antigen receptor)-mediated signaling in T-cells and FCER1 (high affinity immunoglobulin epsilon receptor)-mediated signaling in mast cells. Promotes CSK activation and recruitment to lipid rafts, which results in LCK inhibition. Inhibits immunological synapse formation by preventing dynamic arrangement of lipid raft proteins. May be involved in cell adhesion signaling. The protein is Phosphoprotein associated with glycosphingolipid-enriched microdomains 1 (Pag1) of Rattus norvegicus (Rat).